Consider the following 101-residue polypeptide: Replication restart protein PriB (101 aa).

One can recognise an SSB domain in the interval Met-1–Thr-101.

Belongs to the PriB family. In terms of assembly, homodimer. Interacts with PriA and DnaT. Component of the replication restart primosome. Primosome assembly occurs via a 'hand-off' mechanism. PriA binds to replication forks, subsequently PriB then DnaT bind; DnaT then displaces ssDNA to generate the helicase loading substrate.

Its function is as follows. Involved in the restart of stalled replication forks, which reloads the replicative helicase on sites other than the origin of replication; the PriA-PriB pathway is the major replication restart pathway. During primosome assembly it facilitates complex formation between PriA and DnaT on DNA; stabilizes PriA on DNA. Stimulates the DNA unwinding activity of PriA helicase. The chain is Replication restart protein PriB from Shewanella oneidensis (strain ATCC 700550 / JCM 31522 / CIP 106686 / LMG 19005 / NCIMB 14063 / MR-1).